A 1003-amino-acid polypeptide reads, in one-letter code: MSSQPLTLQTMMAAILNFWSEQGCIIHQGYDLEVGAGTFNPATFLQSLGPEPFRTAYIEPSRRPQDGRYGQHPNRLQKYHQLQVILKPVPENFLSLYLESLKVIGLNLVDHDIRFVHDDWENPTIGAWGLGWEVWLNGMEITQLTYFQAVGSKPLDAISGEITYGVERIAMYLQKKNSVYDVMWNDSLTYGDITQYAEQAWSQYNFETANTTMWLKHFDDFSAEALATLDQGLPLPAYDFVIKASHAFNMLDSRGVISVTERTRYIAKIRQLARAAADKYVAWRESLGFPLLKTPPSTPTVTPKKIPTICQPEDFLLEIGSEELPATFVPTGIQQLESLAKKLLADHGIAYKHLEVLGTPRRLALCIEGLSHVTIRPESEKKGPPLSLLFMTDGSVSPQGEQFFSSHGLSISHRSALDQPSAIWRVRSINGTDYLFLVIPEERKETAAILVNELPQLIRSIRFPQKMTWDNGGVEYARPIRWLVALYGDQILPISLGFVSSGNTSWGHRQLDNRQLTIPSSNMYVDTLRSACVIVSQKERRAIIKQGLQNLTGDQIVAIAPEHLIDETVFLTEHPFVISAQFDPAFCSLPKELLIAEMIQHQRYFPTQNMQGEITNRFLIVCDNSPTDSIVEGNEKALAPRLTDGNFLFKQDLLTPLSSFVEKLKSVTYFESLGSLADKTSRLKLHLEEAYALLPLCAKEDIDTAIHYCKADLVSSVVNEFPELQGIMGRYYLQNASLSRAAALAIGEHLQHITLGSSISTTGALLSILDRIDNLLSCFILGLLPTSSHDPYALRRQSLEILTLLYTTQSSVDIEDLFARLIRHFPSSIPNTVWSPEAVLSKLNTFVWGRLRTILSSLGFDKEVIATVLTDNCPKNPLTIIQSAQSIQELKNTQILKTIAAMYNRLKKILASLSFSVTEQMFSLQSAEDLLFKQALDRFVEETTALPISSKDYLHLLKELAQSTELFLDSVRVASDDESTRNQRIALLIAAQKCFGFYAWGVL.

A glycine--tRNA ligase alpha subunit region spans residues 1 to 310 (MSSQPLTLQT…VTPKKIPTIC (310 aa)). A glycine--tRNA ligase beta subunit region spans residues 311-1003 (QPEDFLLEIG…CFGFYAWGVL (693 aa)).

Belongs to the class-II aminoacyl-tRNA synthetase family.

It is found in the cytoplasm. The enzyme catalyses tRNA(Gly) + glycine + ATP = glycyl-tRNA(Gly) + AMP + diphosphate. The sequence is that of Glycine--tRNA ligase (glyQS) from Chlamydia trachomatis serovar D (strain ATCC VR-885 / DSM 19411 / UW-3/Cx).